A 35-amino-acid chain; its full sequence is Dermonecrotic toxin LgSicTox-beta-LOXN4 (35 aa).

Position 20 (Asp-20) interacts with Mg(2+).

This sequence belongs to the arthropod phospholipase D family. Class II subfamily. The cofactor is Mg(2+). Contains 2 disulfide bonds. As to expression, expressed by the venom gland.

It localises to the secreted. The catalysed reaction is an N-(acyl)-sphingosylphosphocholine = an N-(acyl)-sphingosyl-1,3-cyclic phosphate + choline. It catalyses the reaction an N-(acyl)-sphingosylphosphoethanolamine = an N-(acyl)-sphingosyl-1,3-cyclic phosphate + ethanolamine. It carries out the reaction a 1-acyl-sn-glycero-3-phosphocholine = a 1-acyl-sn-glycero-2,3-cyclic phosphate + choline. The enzyme catalyses a 1-acyl-sn-glycero-3-phosphoethanolamine = a 1-acyl-sn-glycero-2,3-cyclic phosphate + ethanolamine. Its function is as follows. Dermonecrotic toxins cleave the phosphodiester linkage between the phosphate and headgroup of certain phospholipids (sphingolipid and lysolipid substrates), forming an alcohol (often choline) and a cyclic phosphate. This toxin acts on sphingomyelin (SM). It may also act on ceramide phosphoethanolamine (CPE), lysophosphatidylcholine (LPC) and lysophosphatidylethanolamine (LPE), but not on lysophosphatidylserine (LPS), and lysophosphatidylglycerol (LPG). It acts by transphosphatidylation, releasing exclusively cyclic phosphate products as second products. Induces dermonecrosis, hemolysis, increased vascular permeability, edema, inflammatory response, and platelet aggregation. In Loxosceles gaucho (Spider), this protein is Dermonecrotic toxin LgSicTox-beta-LOXN4.